Here is a 71-residue protein sequence, read N- to C-terminus: DNA-directed RNA polymerase subunit epsilon (71 aa).

Belongs to the RNA polymerase subunit epsilon family. RNAP is composed of a core of 2 alpha, a beta and a beta' subunit. The core is associated with a delta subunit, and at least one of epsilon or omega. When a sigma factor is associated with the core the holoenzyme is formed, which can initiate transcription.

The enzyme catalyses RNA(n) + a ribonucleoside 5'-triphosphate = RNA(n+1) + diphosphate. Functionally, a non-essential component of RNA polymerase (RNAP). The polypeptide is DNA-directed RNA polymerase subunit epsilon (Staphylococcus carnosus (strain TM300)).